Reading from the N-terminus, the 406-residue chain is Tryptophan synthase beta chain (406 aa).

Lys-99 carries the N6-(pyridoxal phosphate)lysine modification.

It belongs to the TrpB family. As to quaternary structure, tetramer of two alpha and two beta chains. It depends on pyridoxal 5'-phosphate as a cofactor.

The enzyme catalyses (1S,2R)-1-C-(indol-3-yl)glycerol 3-phosphate + L-serine = D-glyceraldehyde 3-phosphate + L-tryptophan + H2O. The protein operates within amino-acid biosynthesis; L-tryptophan biosynthesis; L-tryptophan from chorismate: step 5/5. Its function is as follows. The beta subunit is responsible for the synthesis of L-tryptophan from indole and L-serine. The polypeptide is Tryptophan synthase beta chain (Brucella melitensis biotype 2 (strain ATCC 23457)).